A 166-amino-acid chain; its full sequence is ATP synthase subunit b (166 aa).

Residues 15–37 (TLYYLLIFAALLLLVKHFAWGPV) traverse the membrane as a helical segment.

Belongs to the ATPase B chain family. As to quaternary structure, F-type ATPases have 2 components, F(1) - the catalytic core - and F(0) - the membrane proton channel. F(1) has five subunits: alpha(3), beta(3), gamma(1), delta(1), epsilon(1). F(0) has three main subunits: a(1), b(2) and c(10-14). The alpha and beta chains form an alternating ring which encloses part of the gamma chain. F(1) is attached to F(0) by a central stalk formed by the gamma and epsilon chains, while a peripheral stalk is formed by the delta and b chains.

The protein localises to the cell membrane. Functionally, f(1)F(0) ATP synthase produces ATP from ADP in the presence of a proton or sodium gradient. F-type ATPases consist of two structural domains, F(1) containing the extramembraneous catalytic core and F(0) containing the membrane proton channel, linked together by a central stalk and a peripheral stalk. During catalysis, ATP synthesis in the catalytic domain of F(1) is coupled via a rotary mechanism of the central stalk subunits to proton translocation. In terms of biological role, component of the F(0) channel, it forms part of the peripheral stalk, linking F(1) to F(0). In Lactobacillus johnsonii (strain CNCM I-12250 / La1 / NCC 533), this protein is ATP synthase subunit b.